The following is a 456-amino-acid chain: PTS system sucrose-specific EIIBC component (456 aa).

Residues 4–87 (EQISCSLLPL…TQAAGISESS (84 aa)) form the PTS EIIB type-1 domain. The active-site Phosphocysteine intermediate; for EIIB activity is Cys-26. A PTS EIIC type-1 domain is found at 107 to 456 (RLLSNIFVPI…LVLKYKTDAE (350 aa)). 10 helical membrane-spanning segments follow: residues 112-132 (IFVP…LLGM), 144-164 (AIYI…PILI), 181-201 (TLGG…AAGF), 213-233 (MIGY…MSIV), 247-267 (LILT…LIIG), 288-308 (AGWL…ITGI), 329-349 (FLLP…LAVW), 360-380 (ITLP…IFGI), 388-408 (FIAA…VHVY), and 428-448 (LLNY…VSLV).

The protein resides in the cell inner membrane. It catalyses the reaction N(pros)-phospho-L-histidyl-[protein](out) + sucrose = sucrose 6(G)-phosphate(in) + L-histidyl-[protein]. Functionally, the phosphoenolpyruvate-dependent sugar phosphotransferase system (sugar PTS), a major carbohydrate active transport system, catalyzes the phosphorylation of incoming sugar substrates concomitantly with their translocation across the cell membrane. This system is involved in sucrose transport. This is PTS system sucrose-specific EIIBC component from Salmonella typhimurium.